The chain runs to 589 residues: Transmembrane 9 superfamily member 3 (589 aa).

The first 28 residues, Met1–Ala28, serve as a signal peptide directing secretion. A glycan (N-linked (GlcNAc...) asparagine) is linked at Asn174. The next 5 membrane-spanning stretches (helical) occupy residues Phe224 to Leu244, Leu294 to Ile314, Ala328 to Ala348, Phe360 to Ile380, and Ala389 to Leu409. A glycan (N-linked (GlcNAc...) asparagine) is linked at Asn419. Helical transmembrane passes span Ile449–Phe469, Gly482–Cys502, Phe519–Phe539, and Phe551–Gly571.

Belongs to the nonaspanin (TM9SF) (TC 9.A.2) family.

It localises to the membrane. This Homo sapiens (Human) protein is Transmembrane 9 superfamily member 3 (TM9SF3).